We begin with the raw amino-acid sequence, 283 residues long: Phosphatidylserine decarboxylase proenzyme (283 aa).

Residues Asp-96, His-152, and Ser-250 each act as charge relay system; for autoendoproteolytic cleavage activity in the active site. Ser-250 acts as the Schiff-base intermediate with substrate; via pyruvic acid; for decarboxylase activity in catalysis. A Pyruvic acid (Ser); by autocatalysis modification is found at Ser-250.

It belongs to the phosphatidylserine decarboxylase family. PSD-B subfamily. Prokaryotic type I sub-subfamily. Heterodimer of a large membrane-associated beta subunit and a small pyruvoyl-containing alpha subunit. Requires pyruvate as cofactor. In terms of processing, is synthesized initially as an inactive proenzyme. Formation of the active enzyme involves a self-maturation process in which the active site pyruvoyl group is generated from an internal serine residue via an autocatalytic post-translational modification. Two non-identical subunits are generated from the proenzyme in this reaction, and the pyruvate is formed at the N-terminus of the alpha chain, which is derived from the carboxyl end of the proenzyme. The autoendoproteolytic cleavage occurs by a canonical serine protease mechanism, in which the side chain hydroxyl group of the serine supplies its oxygen atom to form the C-terminus of the beta chain, while the remainder of the serine residue undergoes an oxidative deamination to produce ammonia and the pyruvoyl prosthetic group on the alpha chain. During this reaction, the Ser that is part of the protease active site of the proenzyme becomes the pyruvoyl prosthetic group, which constitutes an essential element of the active site of the mature decarboxylase.

The protein localises to the cell membrane. It catalyses the reaction a 1,2-diacyl-sn-glycero-3-phospho-L-serine + H(+) = a 1,2-diacyl-sn-glycero-3-phosphoethanolamine + CO2. It participates in phospholipid metabolism; phosphatidylethanolamine biosynthesis; phosphatidylethanolamine from CDP-diacylglycerol: step 2/2. In terms of biological role, catalyzes the formation of phosphatidylethanolamine (PtdEtn) from phosphatidylserine (PtdSer). The chain is Phosphatidylserine decarboxylase proenzyme from Acinetobacter baumannii (strain SDF).